We begin with the raw amino-acid sequence, 103 residues long: Large ribosomal subunit protein bL21 (103 aa).

The protein belongs to the bacterial ribosomal protein bL21 family. As to quaternary structure, part of the 50S ribosomal subunit. Contacts protein L20.

In terms of biological role, this protein binds to 23S rRNA in the presence of protein L20. This Pseudoalteromonas atlantica (strain T6c / ATCC BAA-1087) protein is Large ribosomal subunit protein bL21.